Here is a 667-residue protein sequence, read N- to C-terminus: Single-minded homolog 2 (667 aa).

Positions 1–53 (MKEKSKNAAKTRREKENGEFYELAKLLPLPSAITSQLDKASIIRLTTSYLKMR) constitute a bHLH domain. 2 PAS domains span residues 77 to 149 (AKEL…LHHH) and 218 to 288 (PPSA…LVKG). A PAC domain is found at 292–335 (TKYYRLLSKRGGWVWVQSYATVVHNSRSSRPHCIVSVNYVLTEI). The 332-residue stretch at 336–667 (EYKELQLSLE…GASVIITNGR (332 aa)) folds into the Single-minded C-terminal domain. Disordered regions lie at residues 356-389 (WRTA…YPPQ), 409-428 (ASPP…SESS), and 500-520 (SSSS…RHSL). Positions 367–386 (RKLVKPKNTKMKTKLRTNPY) match the Nuclear localization signal motif. The segment covering 369-381 (LVKPKNTKMKTKL) has biased composition (basic residues). Positions 409-419 (ASPPASAAAPP) are enriched in low complexity.

As to quaternary structure, efficient DNA binding requires dimerization with another bHLH protein. Heterodimer of SIM2 and ARNT.

Its subcellular location is the nucleus. Functionally, transcription factor that may be a master gene of CNS development in cooperation with Arnt. It may have pleiotropic effects in the tissues expressed during development. The sequence is that of Single-minded homolog 2 (SIM2) from Homo sapiens (Human).